The sequence spans 167 residues: Endoribonuclease YbeY (167 aa).

The Zn(2+) site is built by H131, H135, and H141.

The protein belongs to the endoribonuclease YbeY family. The cofactor is Zn(2+).

The protein resides in the cytoplasm. Single strand-specific metallo-endoribonuclease involved in late-stage 70S ribosome quality control and in maturation of the 3' terminus of the 16S rRNA. The polypeptide is Endoribonuclease YbeY (Rickettsia prowazekii (strain Madrid E)).